Here is a 154-residue protein sequence, read N- to C-terminus: Anaerobic ribonucleoside-triphosphate reductase-activating protein (154 aa).

[4Fe-4S] cluster contacts are provided by Cys-26, Cys-30, and Cys-33. Residues Gly-32–Tyr-34 and Gly-74 contribute to the S-adenosyl-L-methionine site.

The protein belongs to the organic radical-activating enzymes family. Forms a tetramer composed of two NrdD and two NrdG subunits. [4Fe-4S] cluster serves as cofactor.

It is found in the cytoplasm. It catalyses the reaction glycyl-[protein] + reduced [flavodoxin] + S-adenosyl-L-methionine = glycin-2-yl radical-[protein] + semiquinone [flavodoxin] + 5'-deoxyadenosine + L-methionine + H(+). Functionally, activation of anaerobic ribonucleoside-triphosphate reductase under anaerobic conditions by generation of an organic free radical, using S-adenosylmethionine and reduced flavodoxin as cosubstrates to produce 5'-deoxy-adenosine. This Escherichia coli O157:H7 protein is Anaerobic ribonucleoside-triphosphate reductase-activating protein (nrdG).